Reading from the N-terminus, the 328-residue chain is RNA 3'-terminal phosphate cyclase (328 aa).

ATP is bound by residues Q100 and 276-280; that span reads HLADQ. The active-site Tele-AMP-histidine intermediate is H302.

This sequence belongs to the RNA 3'-terminal cyclase family. Type 1 subfamily.

Its subcellular location is the cytoplasm. It catalyses the reaction a 3'-end 3'-phospho-ribonucleotide-RNA + ATP = a 3'-end 2',3'-cyclophospho-ribonucleotide-RNA + AMP + diphosphate. In terms of biological role, catalyzes the conversion of 3'-phosphate to a 2',3'-cyclic phosphodiester at the end of RNA. The mechanism of action of the enzyme occurs in 3 steps: (A) adenylation of the enzyme by ATP; (B) transfer of adenylate to an RNA-N3'P to produce RNA-N3'PP5'A; (C) and attack of the adjacent 2'-hydroxyl on the 3'-phosphorus in the diester linkage to produce the cyclic end product. The biological role of this enzyme is unknown but it is likely to function in some aspects of cellular RNA processing. The sequence is that of RNA 3'-terminal phosphate cyclase (rtcA) from Archaeoglobus fulgidus (strain ATCC 49558 / DSM 4304 / JCM 9628 / NBRC 100126 / VC-16).